The primary structure comprises 154 residues: Transcriptional repressor NrdR (154 aa).

Residues 3–34 fold into a zinc finger; it reads CPTCQYNGTRVVDSRPADDGNSIRRRRECEKC. Residues 49 to 139 form the ATP-cone domain; it reads LIVVKKDGAR…VYRQFKDISV (91 aa).

It belongs to the NrdR family. It depends on Zn(2+) as a cofactor.

In terms of biological role, negatively regulates transcription of bacterial ribonucleotide reductase nrd genes and operons by binding to NrdR-boxes. This chain is Transcriptional repressor NrdR, found in Listeria monocytogenes serotype 4a (strain HCC23).